Consider the following 145-residue polypeptide: UPF0299 membrane protein plu1549 (145 aa).

4 helical membrane-spanning segments follow: residues 6–26 (VLIV…CLLT), 34–54 (LPII…LLAF), 65–85 (GCSL…VGVM), and 95–115 (IIPI…IVAY).

The protein belongs to the UPF0299 family.

It localises to the cell inner membrane. The polypeptide is UPF0299 membrane protein plu1549 (Photorhabdus laumondii subsp. laumondii (strain DSM 15139 / CIP 105565 / TT01) (Photorhabdus luminescens subsp. laumondii)).